The following is a 274-amino-acid chain: MAIHLYKTSTPSTRNGAVDSQVKSNPRNNLIYGQHRCGKGRNARGIITAGHRGGGHKRLYRKIDFRRNEKDIYGRIVTIEYDPNRNAYICLIHYGDGEKRYILHPRGAIIGDTIVSGTEVPIKMGNALPLTDMPLGTAIHNIEITLGKGGQLARAAGAVAKLIAKEGKSATLKLPSGEVRLISKNCSATVGQVGNAGVNQKSLGRAGSKCWLGKRPVVRGVVMNPVDHPHGGGEGRAPIGRKKPATPWGYPALGRRSRKRNKYSDNLILRRRSK.

Disordered regions lie at residues 1 to 25 (MAIH…VKSN) and 224 to 274 (NPVD…RRSK).

This sequence belongs to the universal ribosomal protein uL2 family. As to quaternary structure, part of the 50S ribosomal subunit.

It is found in the plastid. The protein resides in the chloroplast. The polypeptide is Large ribosomal subunit protein uL2cz/uL2cy (rpl2-A) (Cucumis sativus (Cucumber)).